A 228-amino-acid chain; its full sequence is MKSTRPFHPTPVITIDGPTASGKGTVAALVAAHLGFHLLDSGALYRLAALASMRYDIAAEDVDALVKLIDDLHITFREGCAQLDGVDVSNDIRAEAVGNRASAIAVHGPVRTALVARQRAFRKTPGLVADGRDMGTVIFPDAMLKVFLTASAEARAARRHKQLMQKGFSANIDDLLRDLRERDARDSNRAAAPLKPAADAKLLDTSALSVDEAVDQVLQWYRALGQPA.

An ATP-binding site is contributed by 17-25 (GPTASGKGT).

This sequence belongs to the cytidylate kinase family. Type 1 subfamily.

The protein resides in the cytoplasm. The catalysed reaction is CMP + ATP = CDP + ADP. It carries out the reaction dCMP + ATP = dCDP + ADP. The protein is Cytidylate kinase of Burkholderia multivorans (strain ATCC 17616 / 249).